Here is a 422-residue protein sequence, read N- to C-terminus: MSRQINAVTPSSSSRRHRLSLSRRRINFTTSPEALPSSSSRSQPSSSSRSQPYSSSRSQPYSSSRRRRRQERSQEQRVSEDNVQIIGNANEPLTRTYHSQGVTYHVHGQVNISNDDPLLSQEDDTIESVDRASQQYQNSIASETAAQRALQRGLDLESQLMSEISPRSPAYSPPYPSNDVLSQSPDLFDSPQSPQQHELELEDEDEEEEEEEGEEVEVSCNICFTTLKDTKNVDSSFVTSIDCNHAVCFKCYVRIIMDNSTYKCFCSASSSDFRVYNKHGYVEFMPLTLIRNRDSIKQHWRELLENNTVNNRIIDLNDVERLERERSELRAKNSQVEHKMTMLNCDYAMLKHEHKITELKLKWANRDLEEFTKKTQELQSTVNDLQEQLRKQVAESQAKFSQFERRNSELVAELYTIEMSKP.

Residues 1–10 (MSRQINAVTP) are compositionally biased toward polar residues. Disordered regions lie at residues 1 to 86 (MSRQ…VQII) and 165 to 215 (SPRS…EGEE). A compositionally biased stretch (basic residues) spans 14 to 26 (SRRHRLSLSRRRI). Low complexity predominate over residues 36-63 (PSSSSRSQPSSSSRSQPYSSSRSQPYSS). Over residues 71-80 (ERSQEQRVSE) the composition is skewed to basic and acidic residues. Polar residues predominate over residues 179–196 (DVLSQSPDLFDSPQSPQQ). A compositionally biased stretch (acidic residues) spans 200–215 (ELEDEDEEEEEEEGEE). The RING-type; degenerate zinc-finger motif lies at 220–268 (CNICFTTLKDTKNVDSSFVTSIDCNHAVCFKCYVRIIMDNSTYKCFCSA). Residues 314 to 414 (IDLNDVERLE…RRNSELVAEL (101 aa)) adopt a coiled-coil conformation.

Belongs to the alphabaculovirus IE2 protein family. Homooligomer. Auto-ubiquitinated.

It localises to the host nucleus. It catalyses the reaction S-ubiquitinyl-[E2 ubiquitin-conjugating enzyme]-L-cysteine + [acceptor protein]-L-lysine = [E2 ubiquitin-conjugating enzyme]-L-cysteine + N(6)-ubiquitinyl-[acceptor protein]-L-lysine.. Functionally, RING-finger E3 ubiquitin ligase that plays an important regulatory role during the initial stages of infection. Migrates to specific nuclear foci early in infection supposely to prepare the sites for viral replication by targeting and ubiquitinating host proteins. The polypeptide is E3 ubiquitin-protein ligase IE2 (IE2) (Bombyx mori nuclear polyhedrosis virus (BmNPV)).